The sequence spans 239 residues: Putative 3-methyladenine DNA glycosylase (239 aa).

This sequence belongs to the DNA glycosylase MPG family.

The polypeptide is Putative 3-methyladenine DNA glycosylase (Pseudomonas aeruginosa (strain LESB58)).